Consider the following 749-residue polypeptide: Taperin (749 aa).

The segment at 144–348 (PAAPCRRGSP…IRPSSKPDME (205 aa)) is disordered. Composition is skewed to polar residues over residues 169 to 179 (SAATRTPTNRS), 230 to 239 (LQKTGSNSFT), and 250 to 266 (VNRS…SPTG). The residue at position 274 (serine 274) is a Phosphoserine. The segment covering 323-335 (QRQWVSSATSAND) has biased composition (polar residues). Over residues 337-347 (FEIRPSSKPDM) the composition is skewed to basic and acidic residues. 3 positions are modified to phosphoserine: serine 401, serine 457, and serine 501. 3 disordered regions span residues 502-586 (EEEA…TTLE), 636-673 (FEYP…SEKP), and 730-749 (LTPA…ALYF). Polar residues-rich tracts occupy residues 534-544 (ELLNRGSNTFT) and 558-570 (HLSQ…QQGA). Residues 647 to 668 (EEAEEEEEEEGEEDGEEEEVGP) show a composition bias toward acidic residues.

Belongs to the taperin family. In terms of assembly, interacts with GRXCR2; the interaction restricts TPRN to the stereocilum basal region. Interacts with actin ACTB; the interaction may stabilize stereocilia. Interacts with CLIC5. Interacts with PTPRQ. TPRN, CLIC5 and PTPQR form concentric rings at the base of stereocilia and may form a complex. Interacts with phosphatase PPP1CA; the interaction results in inhibition of PPP1CA phosphatase activity. Interacts with DNA damage response proteins XRCC6/KU70, XRCC5/KU80, PARP1, TOP1 and TOP2A; these interactions recruit TPRN to sites of DNA damage where it may play a role in DNA repair. As to expression, in the organ of Corti, expressed in the inner ear hair cell stereocilia and the supporting cells (at protein level). Expressed in the sensory epithelia of the organ of Corti and vestibular end organs and, to a lesser extent, in Reisner's membrane and the spiral ligament (at protein level). At postnatal day 2, expression is detected in cochlea, liver, brain, kidney, heart and lung.

It localises to the cell projection. It is found in the stereocilium. The protein resides in the microvillus. The protein localises to the nucleus. Its subcellular location is the nucleoplasm. It localises to the cytoplasm. Essential for hearing. Required for maintenance of stereocilia on both inner and outer hair cells. Necessary for the integrity of the stereociliary rootlet. May act as an actin cytoskeleton regulator involved in the regulation of actin dynamics at the pointed end in hair cells. Forms rings at the base of stereocilia and binds actin filaments in the stereocilia which may stabilize the stereocilia. Acts as a strong inhibitor of PPP1CA phosphatase activity. Recruited to sites of DNA damage and may play a role in DNA damage repair. The sequence is that of Taperin (Tprn) from Mus musculus (Mouse).